A 689-amino-acid polypeptide reads, in one-letter code: Glycine--tRNA ligase beta subunit (689 aa).

Belongs to the class-II aminoacyl-tRNA synthetase family. As to quaternary structure, tetramer of two alpha and two beta subunits.

The protein localises to the cytoplasm. It carries out the reaction tRNA(Gly) + glycine + ATP = glycyl-tRNA(Gly) + AMP + diphosphate. This Acinetobacter baylyi (strain ATCC 33305 / BD413 / ADP1) protein is Glycine--tRNA ligase beta subunit.